A 183-amino-acid polypeptide reads, in one-letter code: Ribosome maturation factor RimP (183 aa).

It belongs to the RimP family.

The protein resides in the cytoplasm. In terms of biological role, required for maturation of 30S ribosomal subunits. In Leptothrix cholodnii (strain ATCC 51168 / LMG 8142 / SP-6) (Leptothrix discophora (strain SP-6)), this protein is Ribosome maturation factor RimP.